Reading from the N-terminus, the 396-residue chain is Elongation factor Tu (396 aa).

The 196-residue stretch at 10-205 (KPHVNIGTIG…AVDESIPAPV (196 aa)) folds into the tr-type G domain. The segment at 19-26 (GHVDHGKT) is G1. 19-26 (GHVDHGKT) provides a ligand contact to GTP. Thr-26 serves as a coordination point for Mg(2+). Residues 62–66 (GITIN) form a G2 region. The interval 83–86 (DAPG) is G3. Residues 83–87 (DAPGH) and 138–141 (NKSD) each bind GTP. Residues 138 to 141 (NKSD) are G4. The interval 175–177 (SAL) is G5.

This sequence belongs to the TRAFAC class translation factor GTPase superfamily. Classic translation factor GTPase family. EF-Tu/EF-1A subfamily. As to quaternary structure, monomer.

It localises to the cytoplasm. The catalysed reaction is GTP + H2O = GDP + phosphate + H(+). Functionally, GTP hydrolase that promotes the GTP-dependent binding of aminoacyl-tRNA to the A-site of ribosomes during protein biosynthesis. The polypeptide is Elongation factor Tu (Mycobacterium leprae (strain Br4923)).